A 282-amino-acid chain; its full sequence is Deoxyribonuclease-1 (282 aa).

The signal sequence occupies residues 1 to 22; the sequence is MRGTRLMGLLLALAGLLQLGLS. Residue N40 is glycosylated (N-linked (GlcNAc...) asparagine). E100 is an active-site residue. Residues C123 and C126 are joined by a disulfide bond. Residue H156 is part of the active site. C195 and C231 form a disulfide bridge.

The protein belongs to the DNase I family. Requires Ca(2+) as cofactor. It depends on Mg(2+) as a cofactor. In terms of processing, the only differences between the A and B forms and the C and D forms are in the compositions of the carbohydrate bound to Asn-40.

It localises to the secreted. The protein localises to the zymogen granule. The protein resides in the nucleus envelope. The enzyme catalyses Endonucleolytic cleavage to 5'-phosphodinucleotide and 5'-phosphooligonucleotide end-products.. Its function is as follows. Serum endocuclease secreted into body fluids by a wide variety of exocrine and endocrine organs. Expressed by non-hematopoietic tissues and preferentially cleaves protein-free DNA. Among other functions, seems to be involved in cell death by apoptosis. Binds specifically to G-actin and blocks actin polymerization. Together with DNASE1L3, plays a key role in degrading neutrophil extracellular traps (NETs). NETs are mainly composed of DNA fibers and are released by neutrophils to bind pathogens during inflammation. Degradation of intravascular NETs by DNASE1 and DNASE1L3 is required to prevent formation of clots that obstruct blood vessels and cause organ damage following inflammation. The chain is Deoxyribonuclease-1 (DNASE1) from Bos taurus (Bovine).